The following is a 1671-amino-acid chain: AF4/FMR2 family member lilli (1671 aa).

Disordered stretches follow at residues 53-79, 126-304, 393-599, 723-761, 774-1162, and 1185-1311; these read YSQNYNMEEYERRKRREREKIERQQGI, SAPG…EKDV, LAGE…SNKW, DSGTSASGSSSSSSSSSDSAVGGEVVPMPGPGETFQLPG, PTQS…TTPH, and KLTP…LQIG. Over residues 70–79 the composition is skewed to basic and acidic residues; the sequence is REKIERQQGI. Composition is skewed to low complexity over residues 145–179 and 210–242; these read SLGHSPSSASSAAGPTSASATTALPGQQQHYQQQQ and PSSSGMAPPRGPPRSSSSNSNSSSATNNASSGG. Residue threonine 416 is modified to Phosphothreonine. Basic and acidic residues predominate over residues 424 to 437; sequence LKTEKNHSLEKQDS. Acidic residues predominate over residues 439-450; it reads LENDLELSESED. Phosphoserine occurs at positions 446 and 448. A compositionally biased stretch (low complexity) spans 459-479; the sequence is SAGNSSNSSESDSSESGSESS. Basic residues predominate over residues 487–496; it reads HPNHQQHHHQ. Low complexity-rich tracts occupy residues 497–522 and 561–587; these read LQQQQQASMQQQQVLQQQQQHRPQPL and PAGVNSSAVMGAGSVSGGTLSSGGSSS. The span at 588 to 599 shows a compositional bias: polar residues; sequence NKTPSPTESNKW. Low complexity predominate over residues 723-755; it reads DSGTSASGSSSSSSSSSDSAVGGEVVPMPGPGE. The segment covering 774–786 has biased composition (polar residues); the sequence is PTQSQKAPPSNSV. Residues 800–810 are compositionally biased toward basic residues; the sequence is QRQKKPRKKKA. Serine 819 and serine 820 each carry phosphoserine. Residues 849 to 861 constitute a DNA-binding region (a.T hook); that stretch reads KKGRGRPRKQQQS. Over residues 858–896 the composition is skewed to low complexity; that stretch reads QQQSGGSGNLSSASAGSSSQTKGPTLTAAKKPLAKTPLA. Phosphoserine occurs at positions 869 and 871. The segment covering 907–917 has biased composition (polar residues); the sequence is SQSSSNGNTPT. Composition is skewed to low complexity over residues 947–963 and 988–1002; these read SSSAESSSKSSSSSSSS and ALLGSGSSSASSSGS. Residues 1009-1020 are compositionally biased toward polar residues; that stretch reads SRSQVGSGQALA. The segment covering 1032–1058 has biased composition (low complexity); the sequence is SQHSQHLSSSECSSSSGGCTAVCSSSS. Basic and acidic residues predominate over residues 1063-1080; sequence EGRREKERERKPKSDKNK. Residues 1120–1130 are compositionally biased toward pro residues; that stretch reads QPPPPHAPPAA. A compositionally biased stretch (polar residues) spans 1188–1203; it reads PAQQNGHLTPKDQATN. 2 stretches are compositionally biased toward basic and acidic residues: residues 1224-1241 and 1250-1280; these read EHPVKPEPELDAGYEAKF and FQLKQERDRDRERERERERERERDREREQPP. Position 1360 is a phosphoserine (serine 1360). A Phosphothreonine modification is found at threonine 1362. Over residues 1562–1581 the composition is skewed to low complexity; it reads NTPSSISPSNSVGSQGSGSN. The segment at 1562–1586 is disordered; it reads NTPSSISPSNSVGSQGSGSNTPPGR.

This sequence belongs to the AF4 family.

It localises to the nucleus. Its function is as follows. Has a role in transcriptional regulation. Acts in parallel with the Ras/MAPK and the PI3K/PKB pathways in the control of cell identity and cellular growth. Essential for regulation of the cytoskeleton and cell growth but not for cell proliferation or growth rate. Required specifically for the microtubule-based basal transport of lipid droplets. Plays a partially redundant function downstream of Raf in cell fate specification in the developing eye. Pair-rule protein that regulates embryonic cellularization, gastrulation and segmentation. This chain is AF4/FMR2 family member lilli, found in Drosophila yakuba (Fruit fly).